The sequence spans 264 residues: Thymidylate synthase (264 aa).

R21 contacts dUMP. (6R)-5,10-methylene-5,6,7,8-tetrahydrofolate is bound at residue H51. Position 126–127 (126–127) interacts with dUMP; the sequence is RR. C146 functions as the Nucleophile in the catalytic mechanism. Residues 166–169, N177, and 207–209 contribute to the dUMP site; these read RSCD and HLY. Residue D169 coordinates (6R)-5,10-methylene-5,6,7,8-tetrahydrofolate. Position 263 (A263) interacts with (6R)-5,10-methylene-5,6,7,8-tetrahydrofolate.

The protein belongs to the thymidylate synthase family. Bacterial-type ThyA subfamily. As to quaternary structure, homodimer.

It is found in the cytoplasm. It carries out the reaction dUMP + (6R)-5,10-methylene-5,6,7,8-tetrahydrofolate = 7,8-dihydrofolate + dTMP. The protein operates within pyrimidine metabolism; dTTP biosynthesis. Its function is as follows. Catalyzes the reductive methylation of 2'-deoxyuridine-5'-monophosphate (dUMP) to 2'-deoxythymidine-5'-monophosphate (dTMP) while utilizing 5,10-methylenetetrahydrofolate (mTHF) as the methyl donor and reductant in the reaction, yielding dihydrofolate (DHF) as a by-product. This enzymatic reaction provides an intracellular de novo source of dTMP, an essential precursor for DNA biosynthesis. This Shewanella sp. (strain ANA-3) protein is Thymidylate synthase.